A 377-amino-acid polypeptide reads, in one-letter code: MAQQTNVAGQKTEKQRKAPFRADHVGSLLRSVPVKEARQKKAAGEMTAEQLRDIENQEITRIVEKQKEIGLDVVTDGEFRRSWWHYDFLEGLDGVEPFIPAEGIQFHNTKTKARSIKVTGKLDFTSHPALGDYQFLHEIAGNATPKLTIPSPNMLFFGEKADKGIYDDQEEYFHDMAQAYKKAIKAFYDAGCRYLQLDDTSWSLFFEDKGREVVRALGGDPETLPAIFAKTINDAVADRPDDLTITMHICRGNFRSTWAASGGYDAVAETILDGLNLDGLFLEYDDDRSGNFDPLRFVKRKDLQIVLGLITSKYGELENPEDVKRRINEAARFVSLDQLCLSPQCGFASTEEGNLLTEEQQWAKLRHVIDIANDVWR.

The segment at 1–25 is disordered; that stretch reads MAQQTNVAGQKTEKQRKAPFRADHV. Residues 11–24 show a composition bias toward basic and acidic residues; it reads KTEKQRKAPFRADH.

It to B.subtilis YxjG.

This is an uncharacterized protein from Bacillus subtilis (strain 168).